The primary structure comprises 278 residues: Dermonecrotic toxin LhSicTox-alphaIV1iii (278 aa).

The active site involves His-5. Residues Glu-25 and Asp-27 each contribute to the Mg(2+) site. His-41 acts as the Nucleophile in catalysis. Disulfide bonds link Cys-45/Cys-51 and Cys-47/Cys-192. Asp-85 contributes to the Mg(2+) binding site.

The protein belongs to the arthropod phospholipase D family. Class II subfamily. Requires Mg(2+) as cofactor. Expressed by the venom gland.

Its subcellular location is the secreted. The catalysed reaction is an N-(acyl)-sphingosylphosphocholine = an N-(acyl)-sphingosyl-1,3-cyclic phosphate + choline. The enzyme catalyses an N-(acyl)-sphingosylphosphoethanolamine = an N-(acyl)-sphingosyl-1,3-cyclic phosphate + ethanolamine. It carries out the reaction a 1-acyl-sn-glycero-3-phosphocholine = a 1-acyl-sn-glycero-2,3-cyclic phosphate + choline. It catalyses the reaction a 1-acyl-sn-glycero-3-phosphoethanolamine = a 1-acyl-sn-glycero-2,3-cyclic phosphate + ethanolamine. Functionally, dermonecrotic toxins cleave the phosphodiester linkage between the phosphate and headgroup of certain phospholipids (sphingolipid and lysolipid substrates), forming an alcohol (often choline) and a cyclic phosphate. This toxin acts on sphingomyelin (SM). It may also act on ceramide phosphoethanolamine (CPE), lysophosphatidylcholine (LPC) and lysophosphatidylethanolamine (LPE), but not on lysophosphatidylserine (LPS), and lysophosphatidylglycerol (LPG). It acts by transphosphatidylation, releasing exclusively cyclic phosphate products as second products. Induces dermonecrosis, hemolysis, increased vascular permeability, edema, inflammatory response, and platelet aggregation. This chain is Dermonecrotic toxin LhSicTox-alphaIV1iii, found in Loxosceles hirsuta (Recluse spider).